Reading from the N-terminus, the 115-residue chain is WLMIVEQKCRVIVMLAKCFEAGKKKCQKYWPDSKETKAFGRVTVFNAEEVKYCGFIRRRFRIESVDKVLSMEVFQYQYINWPDHSVPNTTSNLVRMHKYVIQCLEETGSDAPMVV.

Residues 1 to 115 (WLMIVEQKCR…ETGSDAPMVV (115 aa)) form the Tyrosine-protein phosphatase domain. Aspartate 83 lines the substrate pocket.

It belongs to the protein-tyrosine phosphatase family.

It catalyses the reaction O-phospho-L-tyrosyl-[protein] + H2O = L-tyrosyl-[protein] + phosphate. The polypeptide is Tyrosine-protein phosphatase 18 (STY-18) (Styela plicata (Wrinkled sea squirt)).